We begin with the raw amino-acid sequence, 28 residues long: Omega-agatoxin-Aa2a (28 aa).

Belongs to the neurotoxin 04 (omega-agtx) family. 03 (type II/III omega-agtx) subfamily. As to expression, expressed by the venom gland.

Its subcellular location is the secreted. Omega-agatoxin are antagonist of voltage-gated calcium channels. They block insect neuromuscular transmission presynaptically. Potent blocker of N-type calcium channels (Cav2.2/CACNA1B). This Agelenopsis aperta (North American funnel-web spider) protein is Omega-agatoxin-Aa2a.